We begin with the raw amino-acid sequence, 79 residues long: Acyl carrier protein (79 aa).

In terms of domain architecture, Carrier spans 4 to 79 (AEIKDKVYDI…QAIDYIVNKK (76 aa)). Ser39 carries the post-translational modification O-(pantetheine 4'-phosphoryl)serine.

The protein belongs to the acyl carrier protein (ACP) family. Post-translationally, 4'-phosphopantetheine is transferred from CoA to a specific serine of apo-ACP by AcpS. This modification is essential for activity because fatty acids are bound in thioester linkage to the sulfhydryl of the prosthetic group.

It is found in the cytoplasm. It participates in lipid metabolism; fatty acid biosynthesis. Its function is as follows. Carrier of the growing fatty acid chain in fatty acid biosynthesis. This Chlorobaculum parvum (strain DSM 263 / NCIMB 8327) (Chlorobium vibrioforme subsp. thiosulfatophilum) protein is Acyl carrier protein.